A 1393-amino-acid chain; its full sequence is Rab3 GTPase-activating protein non-catalytic subunit (1393 aa).

The interval 36-67 (RDPSKSTDWEDDGWGAWEENEPQEPEEEGNTC) is disordered. Ser-39 bears the Phosphoserine mark. Acidic residues predominate over residues 44 to 64 (WEDDGWGAWEENEPQEPEEEG). Ser-450 carries the phosphoserine modification. Residue Thr-901 is modified to Phosphothreonine. A phosphoserine mark is found at Ser-916 and Ser-978.

The protein belongs to the Rab3-GAP regulatory subunit family. As to quaternary structure, the Rab3 GTPase-activating complex is a heterodimer composed of RAB3GAP1 and RAB3GAP2. The Rab3 GTPase-activating complex interacts with DMXL2. Interacts with LMAN1. Ubiquitous.

The protein resides in the cytoplasm. Its subcellular location is the endoplasmic reticulum. In terms of biological role, regulatory subunit of the Rab3 GTPase-activating (Rab3GAP) complex composed of RAB3GAP1 and RAB3GAP2, which has GTPase-activating protein (GAP) activity towards various Rab3 subfamily members (RAB3A, RAB3B, RAB3C and RAB3D), RAB5A and RAB43, and guanine nucleotide exchange factor (GEF) activity towards RAB18. As part of the Rab3GAP complex, acts as a GAP for Rab3 proteins by converting active RAB3-GTP to the inactive form RAB3-GDP. Rab3 proteins are involved in regulated exocytosis of neurotransmitters and hormones. The Rab3GAP complex acts as a GEF for RAB18 by promoting the conversion of inactive RAB18-GDP to the active form RAB18-GTP. Recruits and stabilizes RAB18 at the cis-Golgi membrane in human fibroblasts where RAB18 is most likely activated. Also involved in RAB18 recruitment at the endoplasmic reticulum (ER) membrane where it maintains proper ER structure. Required for normal eye and brain development. May participate in neurodevelopmental processes such as proliferation, migration and differentiation before synapse formation, and non-synaptic vesicular release of neurotransmitters. The chain is Rab3 GTPase-activating protein non-catalytic subunit from Homo sapiens (Human).